A 343-amino-acid chain; its full sequence is Heat-inducible transcription repressor HrcA (343 aa).

This sequence belongs to the HrcA family.

Negative regulator of class I heat shock genes (grpE-dnaK-dnaJ and groELS operons). Prevents heat-shock induction of these operons. This is Heat-inducible transcription repressor HrcA from Phytoplasma mali (strain AT).